The chain runs to 256 residues: Sec-independent protein translocase protein TatC (256 aa).

6 helical membrane passes run 25–45 (VICVVLVFVALVYFSNDIYHF), 77–97 (AIVAIFISVPYLLYQIWAFIA), 117–137 (ILFYCGVAFAYYIVFPLVFSF), 158–178 (FALALFLAFGVCFEVPIAIIL), 195–215 (PYIIVAAFFIGMLLTPPDVFS), and 217–237 (TLLAIPMCLLFELGLLVARFY).

This sequence belongs to the TatC family. As to quaternary structure, the Tat system comprises two distinct complexes: a TatABC complex, containing multiple copies of TatA, TatB and TatC subunits, and a separate TatA complex, containing only TatA subunits. Substrates initially bind to the TatABC complex, which probably triggers association of the separate TatA complex to form the active translocon.

It localises to the cell inner membrane. Its function is as follows. Part of the twin-arginine translocation (Tat) system that transports large folded proteins containing a characteristic twin-arginine motif in their signal peptide across membranes. Together with TatB, TatC is part of a receptor directly interacting with Tat signal peptides. In Haemophilus influenzae (strain ATCC 51907 / DSM 11121 / KW20 / Rd), this protein is Sec-independent protein translocase protein TatC.